A 1366-amino-acid polypeptide reads, in one-letter code: DNA-directed RNA polymerase subunit beta' (1366 aa).

Over residues 1–20 (MTSSKPKKTSRVRKTTKNSK) the composition is skewed to basic residues. The tract at residues 1–37 (MTSSKPKKTSRVRKTTKNSKKNNPVTMPVLPKTPPSF) is disordered. 4 residues coordinate Zn(2+): Cys248, Cys315, Cys322, and Cys325. Residues 1292–1366 (TVDMPQSPAV…LQEEGLLSDE (75 aa)) are disordered. The span at 1354–1366 (LEGLQEEGLLSDE) shows a compositional bias: low complexity.

It belongs to the RNA polymerase beta' chain family. RpoC2 subfamily. As to quaternary structure, in cyanobacteria the RNAP catalytic core is composed of 2 alpha, 1 beta, 1 beta', 1 gamma and 1 omega subunit. When a sigma factor is associated with the core the holoenzyme is formed, which can initiate transcription. Requires Zn(2+) as cofactor.

It carries out the reaction RNA(n) + a ribonucleoside 5'-triphosphate = RNA(n+1) + diphosphate. DNA-dependent RNA polymerase catalyzes the transcription of DNA into RNA using the four ribonucleoside triphosphates as substrates. This Prochlorococcus marinus (strain MIT 9215) protein is DNA-directed RNA polymerase subunit beta'.